The chain runs to 287 residues: Glycine--tRNA ligase alpha subunit (287 aa).

Belongs to the class-II aminoacyl-tRNA synthetase family. Tetramer of two alpha and two beta subunits.

It localises to the cytoplasm. The catalysed reaction is tRNA(Gly) + glycine + ATP = glycyl-tRNA(Gly) + AMP + diphosphate. This is Glycine--tRNA ligase alpha subunit from Campylobacter jejuni subsp. doylei (strain ATCC BAA-1458 / RM4099 / 269.97).